The following is an 80-amino-acid chain: Defensin-like protein 16 (80 aa).

The N-terminal stretch at 1-29 (MAKFASIITLIFAALVLFAAFDAPAMVEA) is a signal peptide. The residue at position 30 (glutamine 30) is a Pyrrolidone carboxylic acid. Disulfide bonds link cysteine 33–cysteine 80, cysteine 44–cysteine 65, cysteine 50–cysteine 74, and cysteine 54–cysteine 76.

Belongs to the DEFL family. In terms of tissue distribution, predominantly expressed in leaves.

It localises to the secreted. Confers broad-spectrum resistance to pathogens. Has antifungal activity in vitro. The chain is Defensin-like protein 16 (PDF1.2A) from Arabidopsis thaliana (Mouse-ear cress).